We begin with the raw amino-acid sequence, 289 residues long: MQGILSIQSHVSFGHAGNSSAVFPMQRMGFEVWPIHTVQFSNHTQHQEGWTGRAFSADDISELVRGLGNIGALEKCQAVLTGYQGSAEQCLAVEDTVTKVKQANPEALYVCDPVMGAPDKGCIVAPGIAENLLNRLMPMADVIVPNQFELSQFAEMEIHTLDDAINACQRALAKGPKVVLVKHLYCLSDDSFNMLLATSEGTYLAKRPHFEFAKAPVGAGDLISAIFTAGLLKGWTPKQAFQHCHDACYGVLNATYQAGEWELQTIAAQQEFVEPSAHFPLEEVTLSQA.

Residues serine 9 and 44–45 (TQ) contribute to the substrate site. The ATP site is built by aspartate 112, valine 144, glutamate 149, and lysine 182. Aspartate 221 is a substrate binding site.

It belongs to the pyridoxine kinase family. PdxY subfamily. In terms of assembly, homodimer. Requires Mg(2+) as cofactor.

The enzyme catalyses pyridoxal + ATP = pyridoxal 5'-phosphate + ADP + H(+). The protein operates within cofactor metabolism; pyridoxal 5'-phosphate salvage; pyridoxal 5'-phosphate from pyridoxal: step 1/1. Its function is as follows. Pyridoxal kinase involved in the salvage pathway of pyridoxal 5'-phosphate (PLP). Catalyzes the phosphorylation of pyridoxal to PLP. This Vibrio campbellii (strain ATCC BAA-1116) protein is Pyridoxal kinase PdxY.